The following is a 404-amino-acid chain: 4-hydroxy-3-methylbut-2-enyl diphosphate reductase (404 aa).

C66 serves as a coordination point for [4Fe-4S] cluster. H96 contributes to the (2E)-4-hydroxy-3-methylbut-2-enyl diphosphate binding site. Position 96 (H96) interacts with dimethylallyl diphosphate. Position 96 (H96) interacts with isopentenyl diphosphate. C157 is a [4Fe-4S] cluster binding site. A (2E)-4-hydroxy-3-methylbut-2-enyl diphosphate-binding site is contributed by H185. H185 provides a ligand contact to dimethylallyl diphosphate. An isopentenyl diphosphate-binding site is contributed by H185. E187 functions as the Proton donor in the catalytic mechanism. (2E)-4-hydroxy-3-methylbut-2-enyl diphosphate is bound at residue T250. [4Fe-4S] cluster is bound at residue C288. Positions 317, 318, 319, and 380 each coordinate (2E)-4-hydroxy-3-methylbut-2-enyl diphosphate. Dimethylallyl diphosphate-binding residues include S317, S318, N319, and S380. S317, S318, N319, and S380 together coordinate isopentenyl diphosphate.

The protein belongs to the IspH family. The cofactor is [4Fe-4S] cluster.

It catalyses the reaction isopentenyl diphosphate + 2 oxidized [2Fe-2S]-[ferredoxin] + H2O = (2E)-4-hydroxy-3-methylbut-2-enyl diphosphate + 2 reduced [2Fe-2S]-[ferredoxin] + 2 H(+). The enzyme catalyses dimethylallyl diphosphate + 2 oxidized [2Fe-2S]-[ferredoxin] + H2O = (2E)-4-hydroxy-3-methylbut-2-enyl diphosphate + 2 reduced [2Fe-2S]-[ferredoxin] + 2 H(+). The protein operates within isoprenoid biosynthesis; dimethylallyl diphosphate biosynthesis; dimethylallyl diphosphate from (2E)-4-hydroxy-3-methylbutenyl diphosphate: step 1/1. It functions in the pathway isoprenoid biosynthesis; isopentenyl diphosphate biosynthesis via DXP pathway; isopentenyl diphosphate from 1-deoxy-D-xylulose 5-phosphate: step 6/6. Catalyzes the conversion of 1-hydroxy-2-methyl-2-(E)-butenyl 4-diphosphate (HMBPP) into a mixture of isopentenyl diphosphate (IPP) and dimethylallyl diphosphate (DMAPP). Acts in the terminal step of the DOXP/MEP pathway for isoprenoid precursor biosynthesis. This is 4-hydroxy-3-methylbut-2-enyl diphosphate reductase from Prochlorococcus marinus (strain MIT 9211).